A 185-amino-acid chain; its full sequence is Bcl-2-modifying factor (185 aa).

Residues 1 to 28 (MEPPQCVEELEDDVFQSEDGEPGTQPGG) form a disordered region. The span at 8 to 21 (EELEDDVFQSEDGE) shows a compositional bias: acidic residues. The tract at residues 67–75 (DKATQTLSP) is interaction with DLC2. A BH3 motif is present at residues 134–148 (IARKLQCIADQFHRL).

This sequence belongs to the Bcl-2 family. As to quaternary structure, interacts with MCL1, BCL2, BCL2L1/BCL-Xl, BCL2A1 and BCL2L2/BCL-w. Interacts with the myosin V actin motor complex through its binding to DLC2. Widely expressed with an abundant expression in pancreas, liver kidney and hematopoietic tissues.

Functionally, may play a role in apoptosis. This is Bcl-2-modifying factor (Bmf) from Mus musculus (Mouse).